A 72-amino-acid polypeptide reads, in one-letter code: Translation initiation factor IF-1 (72 aa).

Residues 1-72 (MSKQDVIEFD…TKGRITYRGK (72 aa)) enclose the S1-like domain.

The protein belongs to the IF-1 family. As to quaternary structure, component of the 30S ribosomal translation pre-initiation complex which assembles on the 30S ribosome in the order IF-2 and IF-3, IF-1 and N-formylmethionyl-tRNA(fMet); mRNA recruitment can occur at any time during PIC assembly.

The protein resides in the cytoplasm. One of the essential components for the initiation of protein synthesis. Stabilizes the binding of IF-2 and IF-3 on the 30S subunit to which N-formylmethionyl-tRNA(fMet) subsequently binds. Helps modulate mRNA selection, yielding the 30S pre-initiation complex (PIC). Upon addition of the 50S ribosomal subunit IF-1, IF-2 and IF-3 are released leaving the mature 70S translation initiation complex. This chain is Translation initiation factor IF-1, found in Hydrogenovibrio crunogenus (strain DSM 25203 / XCL-2) (Thiomicrospira crunogena).